Consider the following 616-residue polypeptide: Auxin efflux carrier component 4 (616 aa).

The Extracellular segment spans residues 1 to 7 (MITWHDL). Residues 8–28 (YTVLTAVVPLYVAMILAYGSV) form a helical membrane-spanning segment. Over 29 to 38 (QWWKIFSPDQ) the chain is Cytoplasmic. Residues 39-59 (CSGINRFVAIFAVPLLSFHFI) form a helical membrane-spanning segment. Val51 is a (indol-3-yl)acetate binding site. At 60-70 (STNDPYAMNFR) the chain is on the extracellular side. The chain crosses the membrane as a helical span at residues 71 to 91 (FVAADTLQKIIMLVLLALWAN). The Cytoplasmic portion of the chain corresponds to 92 to 101 (LTKNGSLEWM). The helical transmembrane segment at 102–122 (ITIFSLSTLPNTLVMGIPLLI) threads the bilayer. Asn112 and Leu114 together coordinate (indol-3-yl)acetate. At 123-131 (AMYGTYAGS) the chain is on the extracellular side. Residues 132-152 (LMVQVVVLQCIIWYTLLLFLF) form a helical membrane-spanning segment. (indol-3-yl)acetate is bound at residue Tyr145. Topologically, residues 153-476 (EYRGAKLLIM…LIRNPNTYSS (324 aa)) are cytoplasmic. Residues Ser223, Ser240, and Ser280 each carry the phosphoserine modification. Positions 302–343 (AAGSYPAPNPEFSTGTGVSTKPNKIPKENQQQLQEKDSKASH) are disordered. Positions 312–334 (EFSTGTGVSTKPNKIPKENQQQL) are enriched in polar residues. Residues Ser358 and Ser395 each carry the phosphoserine modification. The interval 390–411 (DQPRKSNARGGGDDIGGLDSGE) is disordered. The segment covering 398-409 (RGGGDDIGGLDS) has biased composition (gly residues). Residues 477-497 (LIGLIWALVAYRWHVAMPKIL) form a helical membrane-spanning segment. Residues 498–500 (QQS) are Extracellular-facing. A helical transmembrane segment spans residues 501 to 521 (ISILSDAGLGMAMFSLGLFMA). Residues 522-535 (LQPKIIACGNSVAT) are Cytoplasmic-facing. A helical transmembrane segment spans residues 536 to 556 (FAMAVRFITGPAIMAVAGIAI). The Extracellular segment spans residues 557–561 (GLHGD). A helical membrane pass occupies residues 562 to 582 (LLRIAIVQAALPQGIVPFVFA). Residues Ile576 and Val577 each coordinate (indol-3-yl)acetate. At 583 to 595 (KEYNVHPTILSTG) the chain is on the cytoplasmic side. Residues 596-616 (VIFGMLIALPITLVYYILLGL) traverse the membrane as a helical segment.

It belongs to the auxin efflux carrier (TC 2.A.69.1) family. In terms of assembly, homodimer. Expressed in the quiescent center precursors and surrounding cells. Present in columella cells of primary roots. Detected in pollen.

The protein resides in the cell membrane. Functionally, acts as a component of the auxin efflux carrier. Plays a role in generating a sink for auxin into columella cells. Maintains the endogenous auxin gradient, which is essential for correct root patterning. Involved in EXO70A3-regulated gravitropic responses in columella cells and in root system architecture (RSA). Together with PIN3 and PIN7, involved in the connective auxin transport (CAT) that ensures communication across the shoot system, and modulates strigolactone-mediated shoot branching control. The abcb19 pin3 pin4 pin7 quadruple mutant exhibits an additive phenotype on strigolactone-mediated bud outgrowth responses and shoot branching control. The chain is Auxin efflux carrier component 4 from Arabidopsis thaliana (Mouse-ear cress).